The sequence spans 571 residues: Proline--tRNA ligase (571 aa).

Belongs to the class-II aminoacyl-tRNA synthetase family. ProS type 1 subfamily. As to quaternary structure, homodimer.

The protein localises to the cytoplasm. The enzyme catalyses tRNA(Pro) + L-proline + ATP = L-prolyl-tRNA(Pro) + AMP + diphosphate. Functionally, catalyzes the attachment of proline to tRNA(Pro) in a two-step reaction: proline is first activated by ATP to form Pro-AMP and then transferred to the acceptor end of tRNA(Pro). As ProRS can inadvertently accommodate and process non-cognate amino acids such as alanine and cysteine, to avoid such errors it has two additional distinct editing activities against alanine. One activity is designated as 'pretransfer' editing and involves the tRNA(Pro)-independent hydrolysis of activated Ala-AMP. The other activity is designated 'posttransfer' editing and involves deacylation of mischarged Ala-tRNA(Pro). The misacylated Cys-tRNA(Pro) is not edited by ProRS. The chain is Proline--tRNA ligase from Pseudomonas putida (strain W619).